A 796-amino-acid chain; its full sequence is Histone-lysine N-methyltransferase PRDM9 (796 aa).

The segment at 1 to 23 is disordered; the sequence is MSRTMNTNKPEENSTEGDAGKLE. The KRAB-related domain occupies 27–90; sequence KVKDEFKDIS…QRQAIKPQIN (64 aa). A disordered region spans residues 149 to 172; sequence SEHAQKPVCSPEEGNTSGQHFGKK. Residues Cys-209, Cys-212, Cys-220, and His-223 each coordinate Zn(2+). Positions 248-362 constitute an SET domain; sequence PGLRIGPSGI…PGRELLVWYG (115 aa). Residues 260–262, Tyr-295, and 324–325 each bind S-adenosyl-L-methionine; these read AGL and NC. 292 to 298 is a substrate binding site; the sequence is NSGYSWL. Residue Tyr-361 coordinates substrate. Residue Lys-372 is modified to N6,N6,N6-trimethyllysine; alternate. Lys-372 is subject to N6-methyllysine; alternate. N6-methyllysine is present on residues Lys-376 and Lys-378. The C2H2-type 1 zinc finger occupies 392–415; the sequence is HPCFLCSLAFSSQKFLTQHVEWNH. Zn(2+) is bound by residues Cys-394, Cys-397, His-410, and His-415. Positions 443-457 are enriched in basic and acidic residues; the sequence is FDSQNKNDKASNEVK. Positions 443 to 497 are disordered; that stretch reads FDSQNKNDKASNEVKRKSKPRHKWTRQRISTAFSSTLKEQMRSEESKRTVEEELR. The segment covering 458-468 has biased composition (basic residues); sequence RKSKPRHKWTR. Over residues 469 to 480 the composition is skewed to polar residues; the sequence is QRISTAFSSTLK. Basic and acidic residues predominate over residues 481–497; sequence EQMRSEESKRTVEEELR. The C2H2-type 2; degenerate zinc-finger motif lies at 522-540; sequence QCGQCFSDKSNVSEHQRTH. 9 consecutive C2H2-type zinc fingers follow at residues 546 to 568, 574 to 596, 602 to 624, 630 to 652, 658 to 680, 686 to 708, 714 to 736, 742 to 764, and 770 to 792; these read YICR…QRTH and YICR…LRTH. Zn(2+) contacts are provided by Cys-716, Cys-719, His-732, His-736, Cys-744, Cys-747, His-760, His-764, Cys-772, Cys-775, His-788, and His-792.

Belongs to the class V-like SAM-binding methyltransferase superfamily. In terms of assembly, homodimer. Interacts with EHMT2 and CDYL; interaction only takes place when PRDM9 is bound to hotspot DNA. Interacts with CXXC1; this interaction does not link PRDM9-activated recombination hotspot sites with DSB machinery and is not required for the hotspot recognition pathway. Forms a complex with EWSR1, REC8, SYCP3 and SYCP1; complex formation is dependent of phosphorylated form of REC8 and requires PRDM9 bound to hotspot DNA; EWSR1 joins PRDM9 with the chromosomal axis through REC8. Mono-methylated; automethylated. Tri-methylated; automethylated. Mono-methylation is predominant; automethylation is lower and slower than H3 peptide methylation and is in a highest S-adenosyl-L-methionine concentration-dependent. There are two major sites for automethylation at Lys-372 and Lys-378. Lysines can be simultaneously methylated, such as Lys-372(me3)/Lys-376(me1), Lys-372(me1)/Lys-378(me1) and Lys-372(me1)/Lys-376(me1)/Lys-378(me1). Automethylation is an intramolecular (cis) process.

It localises to the nucleus. Its subcellular location is the chromosome. It catalyses the reaction L-lysyl-[protein] + S-adenosyl-L-methionine = N(6)-methyl-L-lysyl-[protein] + S-adenosyl-L-homocysteine + H(+). The catalysed reaction is N(6)-methyl-L-lysyl-[protein] + S-adenosyl-L-methionine = N(6),N(6)-dimethyl-L-lysyl-[protein] + S-adenosyl-L-homocysteine + H(+). The enzyme catalyses L-lysyl(4)-[histone H3] + 3 S-adenosyl-L-methionine = N(6),N(6),N(6)-trimethyl-L-lysyl(4)-[histone H3] + 3 S-adenosyl-L-homocysteine + 3 H(+). It carries out the reaction L-lysyl(36)-[histone H3] + 3 S-adenosyl-L-methionine = N(6),N(6),N(6)-trimethyl-L-lysyl(36)-[histone H3] + 3 S-adenosyl-L-homocysteine + 3 H(+). It catalyses the reaction L-lysyl(9)-[histone H3] + 3 S-adenosyl-L-methionine = N(6),N(6),N(6)-trimethyl-L-lysyl(9)-[histone H3] + 3 S-adenosyl-L-homocysteine + 3 H(+). The catalysed reaction is L-lysyl(20)-[histone H4] + S-adenosyl-L-methionine = N(6)-methyl-L-lysyl(20)-[histone H4] + S-adenosyl-L-homocysteine + H(+). The enzyme catalyses N(6)-methyl-L-lysyl(20)-[histone H4] + S-adenosyl-L-methionine = N(6),N(6)-dimethyl-L-lysyl(20)-[histone H4] + S-adenosyl-L-homocysteine + H(+). Histone methyltransferase that sequentially mono-, di-, and tri-methylates both 'Lys-4' (H3K4) and 'Lys-36' (H3K36) of histone H3 to produce respectively trimethylated 'Lys-4' (H3K4me3) and trimethylated 'Lys-36' (H3K36me3) histone H3 and plays a key role in meiotic prophase by determining hotspot localization thereby promoting meiotic recombination. Can also methylate all four core histones with H3 being the best substrate and the most highly modified. Is also able, on one hand, to mono and di-methylate H4K20 and on other hand to trimethylate H3K9 with the di-methylated H3K9 as the best substrate. During meiotic prophase, binds specific DNA sequences through its zinc finger domains thereby determining hotspot localization where it promotes local H3K4me3 and H3K36me3 enrichment on the same nucleosomes through its histone methyltransferase activity. Thereby promotes double-stranded breaks (DSB) formation, at this subset of PRDM9-binding sites, that initiates meiotic recombination for the proper meiotic progression. During meiotic progression hotspot-bound PRDM9 interacts with several complexes; in early leptonema binds CDYL and EHMT2 followed by EWSR1 and CXXC1 by the end of leptonema. EWSR1 joins PRDM9 with the chromosomal axis through REC8. In this way, controls the DSB repair pathway, pairing of homologous chromosomes and sex body formation. Moreover plays a central role in the transcriptional activation of genes during early meiotic prophase thanks to H3K4me3 and H3K36me3 enrichment that represents a specific tag for epigenetic transcriptional activation. In addition performs automethylation. Acetylation and phosphorylation of histone H3 attenuate or prevent histone H3 methylation. The chain is Histone-lysine N-methyltransferase PRDM9 from Rattus norvegicus (Rat).